A 159-amino-acid chain; its full sequence is Growth arrest and DNA damage-inducible protein GADD45 gamma (159 aa).

Residues 43-86 form a homodimerization region; sequence VYESAKVLNVDPDNVTFCVLAADEEDEGDIALQIHFTLIQAFCC.

This sequence belongs to the GADD45 family. As to quaternary structure, undergoes concentration-dependent homodimerization, which is required for growth inhibititory activity and enhances interaction with PCNA. Interacts with GADD45GIP1. Interacts with PCNA.

Involved in the regulation of growth and apoptosis. Mediates activation of stress-responsive MTK1/MEKK4 MAPKKK. This chain is Growth arrest and DNA damage-inducible protein GADD45 gamma (GADD45G), found in Bos taurus (Bovine).